Reading from the N-terminus, the 245-residue chain is 5-oxoprolinase subunit A (245 aa).

It belongs to the LamB/PxpA family. In terms of assembly, forms a complex composed of PxpA, PxpB and PxpC.

The catalysed reaction is 5-oxo-L-proline + ATP + 2 H2O = L-glutamate + ADP + phosphate + H(+). Catalyzes the cleavage of 5-oxoproline to form L-glutamate coupled to the hydrolysis of ATP to ADP and inorganic phosphate. The protein is 5-oxoprolinase subunit A of Haemophilus influenzae (strain 86-028NP).